The chain runs to 917 residues: Intercellular adhesion molecule 5 (917 aa).

A signal peptide spans methionine 1–leucine 31. Residues glutamate 32–tryptophan 833 are Extracellular-facing. 9 consecutive Ig-like C2-type domains span residues glycine 48 to serine 130, glycine 135 to alanine 235, aspartate 242 to leucine 329, glycine 337 to leucine 402, proline 408 to threonine 486, proline 491 to threonine 567, proline 572 to glycine 651, proline 665 to threonine 738, and proline 745 to arginine 828. Asparagine 54 carries N-linked (GlcNAc...) (high mannose) asparagine glycosylation. Disulfide bonds link cysteine 55-cysteine 99 and cysteine 59-cysteine 103. 2 N-linked (GlcNAc...) asparagine glycosylation sites follow: asparagine 74 and asparagine 137. Cysteine 142 and cysteine 198 are oxidised to a cystine. Threonine 182 is modified (phosphothreonine). Residues asparagine 195, asparagine 214, asparagine 274, asparagine 316, asparagine 371, and asparagine 397 are each glycosylated (N-linked (GlcNAc...) asparagine). A disulfide bridge links cysteine 249 with cysteine 302. A disulfide bridge connects residues cysteine 344 and cysteine 383. 3 cysteine pairs are disulfide-bonded: cysteine 415–cysteine 470, cysteine 498–cysteine 551, and cysteine 579–cysteine 644. Residues asparagine 582 and asparagine 645 are each glycosylated (N-linked (GlcNAc...) asparagine). Cysteine 672 and cysteine 724 are joined by a disulfide. Asparagine 762, asparagine 793, and asparagine 794 each carry an N-linked (GlcNAc...) asparagine glycan. Cysteine 767 and cysteine 812 are joined by a disulfide. Residues leucine 834–leucine 854 traverse the membrane as a helical segment. At alanine 855–serine 917 the chain is on the cytoplasmic side. Residues glycine 884–glycine 893 are compositionally biased toward gly residues. Residues glycine 884 to glutamate 908 are disordered.

The protein belongs to the immunoglobulin superfamily. ICAM family. Post-translationally, glycosylation at Asn-54 is critical for functional folding. In terms of tissue distribution, expressed on neurons in the most rostral segment of the mammalian brain, the telencephalon.

It is found in the membrane. Its function is as follows. ICAM proteins are ligands for the leukocyte adhesion protein LFA-1 (integrin alpha-L/beta-2). This Mus musculus (Mouse) protein is Intercellular adhesion molecule 5 (Icam5).